Here is a 252-residue protein sequence, read N- to C-terminus: 4-hydroxy-tetrahydrodipicolinate reductase (252 aa).

NAD(+) is bound by residues Gly-8–Met-13, Cys-84–Thr-86, and Ser-108–Met-111. The Proton donor/acceptor role is filled by His-141. His-142 is a binding site for (S)-2,3,4,5-tetrahydrodipicolinate. Lys-145 serves as the catalytic Proton donor. Gly-151 to Thr-152 serves as a coordination point for (S)-2,3,4,5-tetrahydrodipicolinate.

The protein belongs to the DapB family.

The protein resides in the cytoplasm. The catalysed reaction is (S)-2,3,4,5-tetrahydrodipicolinate + NAD(+) + H2O = (2S,4S)-4-hydroxy-2,3,4,5-tetrahydrodipicolinate + NADH + H(+). It catalyses the reaction (S)-2,3,4,5-tetrahydrodipicolinate + NADP(+) + H2O = (2S,4S)-4-hydroxy-2,3,4,5-tetrahydrodipicolinate + NADPH + H(+). The protein operates within amino-acid biosynthesis; L-lysine biosynthesis via DAP pathway; (S)-tetrahydrodipicolinate from L-aspartate: step 4/4. Functionally, catalyzes the conversion of 4-hydroxy-tetrahydrodipicolinate (HTPA) to tetrahydrodipicolinate. This chain is 4-hydroxy-tetrahydrodipicolinate reductase, found in Clostridium botulinum (strain Eklund 17B / Type B).